Reading from the N-terminus, the 127-residue chain is ALK and LTK ligand 1 (127 aa).

The N-terminal stretch at 1 to 27 (MWLTKPSTPVSALLLLALALSPPGTQG) is a signal peptide. 2 disulfide bridges follow: Cys-88-Cys-124 and Cys-102-Cys-111.

The protein belongs to the ALKAL family.

Its subcellular location is the secreted. The protein localises to the cell membrane. Cytokine that acts as a physiological ligand for receptor tyrosine kinase LTK, leading to its activation. Monomeric ALKAL1 binds to LTK, leading to LTK homodimerization and activation. In contrast to ALKAL2, does not act as a potent physiological ligand for ALK. In Mus musculus (Mouse), this protein is ALK and LTK ligand 1.